Reading from the N-terminus, the 244-residue chain is uncharacterized protein (244 aa).

2 helical membrane passes run tryptophan 29–methionine 49 and leucine 139–isoleucine 159.

Belongs to the FMP10 family.

Its subcellular location is the mitochondrion membrane. This is an uncharacterized protein from Saccharomyces cerevisiae (strain ATCC 204508 / S288c) (Baker's yeast).